The following is a 549-amino-acid chain: Hydroxylamine reductase (549 aa).

Residues cysteine 5, cysteine 8, cysteine 17, and cysteine 23 each coordinate [4Fe-4S] cluster. Hybrid [4Fe-2O-2S] cluster is bound by residues histidine 244, glutamate 268, cysteine 312, cysteine 403, cysteine 431, cysteine 456, glutamate 491, and lysine 493. Residue cysteine 403 is modified to Cysteine persulfide.

Belongs to the HCP family. It depends on [4Fe-4S] cluster as a cofactor. Hybrid [4Fe-2O-2S] cluster serves as cofactor.

The protein localises to the cytoplasm. It carries out the reaction A + NH4(+) + H2O = hydroxylamine + AH2 + H(+). In terms of biological role, catalyzes the reduction of hydroxylamine to form NH(3) and H(2)O. This chain is Hydroxylamine reductase, found in Caldanaerobacter subterraneus subsp. tengcongensis (strain DSM 15242 / JCM 11007 / NBRC 100824 / MB4) (Thermoanaerobacter tengcongensis).